Consider the following 117-residue polypeptide: ATP-dependent Clp protease adapter protein ClpS 1 (117 aa).

Belongs to the ClpS family. Binds to the N-terminal domain of the chaperone ClpA.

Functionally, involved in the modulation of the specificity of the ClpAP-mediated ATP-dependent protein degradation. In Agrobacterium fabrum (strain C58 / ATCC 33970) (Agrobacterium tumefaciens (strain C58)), this protein is ATP-dependent Clp protease adapter protein ClpS 1.